We begin with the raw amino-acid sequence, 141 residues long: Aspartate 1-decarboxylase 1 (141 aa).

The active-site Schiff-base intermediate with substrate; via pyruvic acid is Ser25. At Ser25 the chain carries Pyruvic acid (Ser). Residue Thr57 participates in substrate binding. Catalysis depends on Tyr58, which acts as the Proton donor. Residue 73 to 75 participates in substrate binding; sequence GPA.

The protein belongs to the PanD family. In terms of assembly, heterooctamer of four alpha and four beta subunits. The cofactor is pyruvate. In terms of processing, is synthesized initially as an inactive proenzyme, which is activated by self-cleavage at a specific serine bond to produce a beta-subunit with a hydroxyl group at its C-terminus and an alpha-subunit with a pyruvoyl group at its N-terminus.

It localises to the cytoplasm. The catalysed reaction is L-aspartate + H(+) = beta-alanine + CO2. It participates in cofactor biosynthesis; (R)-pantothenate biosynthesis; beta-alanine from L-aspartate: step 1/1. In terms of biological role, catalyzes the pyruvoyl-dependent decarboxylation of aspartate to produce beta-alanine. In Paenarthrobacter aurescens (strain TC1), this protein is Aspartate 1-decarboxylase 1.